Here is a 242-residue protein sequence, read N- to C-terminus: Dickkopf-like protein 1 (242 aa).

The N-terminal stretch at 1–30 (MGEASPPAPARRHLLVLLLLLSTLVIPSAA) is a signal peptide. Asn-97 and Asn-112 each carry an N-linked (GlcNAc...) asparagine glycan.

Interacts with SLXL1; Co-localize in seminiferous tubules. Interacts with SLY. N-glycosylated during spermatogenesis. Not N-glycosylated in mature sperm. In terms of tissue distribution, more highly expressed in adult testis than in fetal testis. Exclusively expressed in the testis (at protein level). Intense expression in stages II, III and IV of spermatogenesis, whereas expression is lower in stage I.

It is found in the secreted. The protein localises to the cytoplasmic vesicle. Its subcellular location is the secretory vesicle. It localises to the acrosome. Functionally, involved in fertilization by facilitating sperm penetration of the zona pellucida. May promote spermatocyte apoptosis, thereby limiting sperm production. In adults, may reduce testosterone synthesis in Leydig cells. Is not essential either for development or fertility. The chain is Dickkopf-like protein 1 from Homo sapiens (Human).